The primary structure comprises 693 residues: Tegument protein UL47 (693 aa).

Disordered stretches follow at residues 1 to 32 and 48 to 126; these read MSAR…DGVG and ELEA…GYLG. The span at 48–57 shows a compositional bias: acidic residues; sequence ELEALEEMAG. An RNA-binding region spans residues 50 to 75; the sequence is EALEEMAGDEPPVRRRREGPRARRRR. A Nuclear localization signal motif is present at residues 63–75; it reads RRRREGPRARRRR. A compositionally biased stretch (basic residues) spans 63-75; that stretch reads RRRREGPRARRRR. Residues 647–670 carry the Nuclear export signal motif; sequence SVLGPRVRVVDIMSQFRKLLMGDE.

It belongs to the alphaherpesvirinae HHV-1 UL47 family. As to quaternary structure, interacts with US3 kinase. Interacts with UL31 and UL34; these interactions seem important for efficient virion nuclear egress. Interacts with UL41/VHS. Phosphorylated by US3. This phosphorylation is required for proper nuclear localization.

The protein resides in the virion tegument. Its subcellular location is the host nucleus. The protein localises to the host cytoplasm. Tegument protein that can bind to various RNA transcripts. Plays a role in the attenuation of selective viral and cellular mRNA degradation by modulating the activity of host shutoff RNase UL41/VHS. Also plays a role in the primary envelopment of virions in the perinuclear space, probably by interacting with two nuclear egress proteins UL31 and UL34. The sequence is that of Tegument protein UL47 from Homo sapiens (Human).